Reading from the N-terminus, the 532-residue chain is Flavin-containing monooxygenase 3 (532 aa).

Residues 9 to 13, Glu32, 40 to 41, and 61 to 62 each bind FAD; these read GAGVS, LW, and NS. NADP(+) contacts are provided by residues 60 to 61 and 195 to 198; these read SN and SGCD. Ser401 is modified (phosphoserine). The helical transmembrane segment at 510–530 threads the bilayer; sequence FFFHWLKLFAIPILLIAVFLV.

The protein belongs to the FMO family. Requires FAD as cofactor.

The protein resides in the microsome membrane. It localises to the endoplasmic reticulum membrane. The enzyme catalyses trimethylamine + NADPH + O2 = trimethylamine N-oxide + NADP(+) + H2O. It carries out the reaction N,N-dimethylaniline + NADPH + O2 + H(+) = N,N-dimethylaniline N-oxide + NADP(+) + H2O. It catalyses the reaction hypotaurine + NADPH + O2 + H(+) = taurine + NADP(+) + H2O. The catalysed reaction is (S)-nicotine + NADPH + O2 = trans-(S)-nicotine N(1')-oxide + NADP(+) + H2O. The enzyme catalyses albendazole + NADPH + O2 + H(+) = albendazole S-oxide + NADP(+) + H2O. Essential hepatic enzyme that catalyzes the oxygenation of a wide variety of nitrogen- and sulfur-containing compounds including drugs as well as dietary compounds. Plays an important role in the metabolism of trimethylamine (TMA), via the production of trimethylamine N-oxide (TMAO) metabolite. TMA is generated by the action of gut microbiota using dietary precursors such as choline, choline containing compounds, betaine or L-carnitine. By regulating TMAO concentration, FMO3 directly impacts both platelet responsiveness and rate of thrombus formation. The sequence is that of Flavin-containing monooxygenase 3 (FMO3) from Pan troglodytes (Chimpanzee).